The sequence spans 418 residues: Actin-like protein 7B (418 aa).

Positions 1-42 (MATKNSPSPKPMGTAQGDPGEAGTLPAPEAAGIRDTGSTQLK) are disordered. A Phosphoserine modification is found at Ser-8.

This sequence belongs to the actin family. As to expression, testis specific.

The protein localises to the cytoplasm. It localises to the cytoskeleton. This Mus musculus (Mouse) protein is Actin-like protein 7B (Actl7b).